We begin with the raw amino-acid sequence, 468 residues long: FAD-linked oxidoreductase hasG (468 aa).

The region spanning 37 to 211 (LGKIPAAVVQ…VEATFRAYPW (175 aa)) is the FAD-binding PCMH-type domain.

Belongs to the oxygen-dependent FAD-linked oxidoreductase family. FAD is required as a cofactor.

The protein operates within secondary metabolite biosynthesis. Functionally, FAD-linked oxidoreductase; part of the gene cluster that mediates the biosynthesis of hexadehydro-astechrome (HAS), a tryptophan-derived iron(III)-complex that acts as a virulence factor in infected mice. Within the pathway, hasG converts the prenyl to a methylbutadienyl side chain. The HAS biosynthesis begins with the synthesis of a tethered Trp-Ala dipeptide by the NRPS hasD. The 7-dimethylallyltryptophan synthase hasE then catalyzes the prenylation of the hasD-tethered tryptophan or the resulting tethered Trp-Ala dipeptide at the C-7 position of the indole moiety. HAS biosynthesis continues via tethered intermediates with the succesive actions of the cytochrome P450 monooxygenase hasH, the O-methyltransferase hasC, and the FAD-linked oxidoreductase hasG. The resulting O-methylated diketopiperazine is then released from hasD. Finally, three O-methylated diketopiperazine molecules assemble in a trimeric complex with Fe(III) to produce hexadehydro-astechrome. This Aspergillus fumigatus (strain CBS 144.89 / FGSC A1163 / CEA10) (Neosartorya fumigata) protein is FAD-linked oxidoreductase hasG.